A 296-amino-acid chain; its full sequence is Tubulin polyglutamylase complex subunit 2 (296 aa).

Residues 254–265 show a composition bias toward basic residues; that stretch reads SKNKILIPKKKG. The interval 254–296 is disordered; sequence SKNKILIPKKKGPVPPASGQKGPGPLPPPTSKPTTGSGNPVRK. A compositionally biased stretch (low complexity) spans 285-296; the sequence is KPTTGSGNPVRK.

As to quaternary structure, part of the neuronal tubulin polyglutamylase complex which contains TPGS1, TPGS2, TTLL1, LRRC49 and NICN1. Interacts with CSTPP1 and LRRC49.

The protein localises to the cytoplasm. Its subcellular location is the cytoskeleton. The protein resides in the microtubule organizing center. It localises to the centrosome. It is found in the centriolar satellite. Its function is as follows. Subunit of the tubulin polyglutamylase complex (TPGC). The complex mediates cilia and flagella polyglutamylation which is essential for their biogenesis and motility. This is Tubulin polyglutamylase complex subunit 2 (Tpgs2) from Mus musculus (Mouse).